Here is a 582-residue protein sequence, read N- to C-terminus: Vesicular glutamate transporter 2 (582 aa).

Over 1–71 the chain is Cytoplasmic; it reads MESVKQRILT…CTCFGLPRRY (71 aa). A helical transmembrane segment spans residues 72-92; it reads IIAIMSGLGFCISFGIRCNLG. The Vesicular portion of the chain corresponds to 93 to 125; it reads VAIVDMVNNSTIHRGGKVIKEKAKFNWDPETVG. N100 and N101 each carry an N-linked (GlcNAc...) asparagine glycan. Residues 126 to 146 traverse the membrane as a helical segment; the sequence is MIHGSFFWGYIITQIPGGYIA. Over 147-148 the chain is Cytoplasmic; that stretch reads SR. The chain crosses the membrane as a helical span at residues 149–169; that stretch reads LAANRVFGAAILLTSTLNMLI. Residues 170-177 are Vesicular-facing; that stretch reads PSAARVHY. Residues 178 to 198 traverse the membrane as a helical segment; sequence GCVIFVRILQGLVEGVTYPAC. The Cytoplasmic segment spans residues 199–216; sequence HGIWSKWAPPLERSRLAT. A helical transmembrane segment spans residues 217–237; it reads TSFCGSYAGAVIAMPLAGILV. Residues 238–244 are Vesicular-facing; it reads QYTGWSS. The helical transmembrane segment at 245 to 265 threads the bilayer; it reads VFYVYGSFGMIWYMFWLLVSY. The Cytoplasmic segment spans residues 266–310; sequence ESPAKHPTITDEERRYIEESIGESANLLGAMEKFKTPWRKFFTSM. A helical membrane pass occupies residues 311–331; sequence PVYAIIVANFCRSWTFYLLLI. The Vesicular portion of the chain corresponds to 332 to 349; sequence SQPAYFEEVFGFEISKVG. Residues 350–370 form a helical membrane-spanning segment; it reads MLSAVPHLVMTIIVPIGGQIA. Topologically, residues 371–386 are cytoplasmic; that stretch reads DFLRSKQILSTTTVRK. Residues 387–407 traverse the membrane as a helical segment; the sequence is IMNCGGFGMEATLLLVVGYSH. The Vesicular segment spans residues 408–409; the sequence is TR. The chain crosses the membrane as a helical span at residues 410–430; it reads GVAISFLVLAVGFSGFAISGF. Residues 431–443 are Cytoplasmic-facing; sequence NVNHLDIAPRYAS. A helical membrane pass occupies residues 444 to 464; sequence ILMGISNGVGTLSGMVCPIIV. Over 465–477 the chain is Vesicular; the sequence is GAMTKNKSREEWQ. N470 is a glycosylation site (N-linked (GlcNAc...) asparagine). Residues 478-498 form a helical membrane-spanning segment; that stretch reads YVFLIAALVHYGGVIFYAIFA. Residues 499 to 582 lie on the Cytoplasmic side of the membrane; sequence SGEKQPWADP…YNYKDRDDYS (84 aa).

Belongs to the major facilitator superfamily. Sodium/anion cotransporter family. VGLUT subfamily.

Its subcellular location is the cytoplasmic vesicle. It localises to the secretory vesicle. It is found in the synaptic vesicle membrane. The protein localises to the synapse. The protein resides in the synaptosome. Its subcellular location is the cell membrane. It catalyses the reaction L-glutamate(out) = L-glutamate(in). The enzyme catalyses 3 Na(+)(out) + phosphate(out) = 3 Na(+)(in) + phosphate(in). It carries out the reaction phosphate(in) = phosphate(out). The catalysed reaction is K(+)(in) + H(+)(out) = K(+)(out) + H(+)(in). It catalyses the reaction chloride(in) = chloride(out). Its activity is regulated as follows. Chloride channel activity is allosterically activated by lumenal H(+) and Cl(-) leading to synaptic vesicles acidification. The L-glutamate transport activity is allosterically activated by lumenal H(+) and Cl(-). The allosteric requirement for H(+) efficiently prevents non-vesicular efflux across the plasma membrane. The L-glutamate uniporter activity exhibits a biphasic dependence on chloride concentration. In terms of biological role, multifunctional transporter that transports L-glutamate as well as multiple ions such as chloride, proton, potassium, sodium and phosphate. At the synaptic vesicle membrane, mainly functions as a uniporter which transports preferentially L-glutamate but also, phosphate from the cytoplasm into synaptic vesicles at presynaptic nerve terminals of excitatory neural cells. The L-glutamate or phosphate uniporter activity is electrogenic and is driven by the proton electrochemical gradient, mainly by the electrical gradient established by the vacuolar H(+)-ATPase across the synaptic vesicle membrane. In addition, functions as a chloride channel that allows a chloride permeation through the synaptic vesicle membrane therefore affects the proton electrochemical gradient and promotes synaptic vesicles acidification. Moreover, functions as a vesicular K(+)/H(+) antiport allowing to maintain the electrical gradient and to decrease chemical gradient and therefore sustain vesicular L-glutamate uptake. The vesicular H(+)/H(+) antiport activity is electroneutral. At the plasma membrane, following exocytosis, functions as a symporter of Na(+) and phosphate from the extracellular space to the cytoplasm allowing synaptic phosphate homeostasis regulation. The symporter activity is driven by an inside negative membrane potential and is electrogenic. Also involved in the regulation of retinal hyaloid vessel regression during postnatal development. May also play a role in the endocrine L-glutamatergic system of other tissues such as pineal gland and pancreas. This Bos taurus (Bovine) protein is Vesicular glutamate transporter 2.